A 156-amino-acid chain; its full sequence is Small ribosomal subunit protein uS7 (156 aa).

The protein belongs to the universal ribosomal protein uS7 family. As to quaternary structure, part of the 30S ribosomal subunit. Contacts proteins S9 and S11.

Its function is as follows. One of the primary rRNA binding proteins, it binds directly to 16S rRNA where it nucleates assembly of the head domain of the 30S subunit. Is located at the subunit interface close to the decoding center, probably blocks exit of the E-site tRNA. This chain is Small ribosomal subunit protein uS7, found in Deinococcus deserti (strain DSM 17065 / CIP 109153 / LMG 22923 / VCD115).